Here is a 115-residue protein sequence, read N- to C-terminus: NADH-ubiquinone oxidoreductase chain 3 (115 aa).

The next 3 membrane-spanning stretches (helical) occupy residues 4–24, 55–75, and 84–104; these read ALTLFTNTALASLLVLIAFWL, FFLVAITFLLFDLEIALLLPL, and LTTMLTMALLLISLLAASLAY.

This sequence belongs to the complex I subunit 3 family. As to quaternary structure, core subunit of respiratory chain NADH dehydrogenase (Complex I) which is composed of 45 different subunits. Interacts with TMEM186. Interacts with TMEM242.

The protein localises to the mitochondrion inner membrane. It catalyses the reaction a ubiquinone + NADH + 5 H(+)(in) = a ubiquinol + NAD(+) + 4 H(+)(out). In terms of biological role, core subunit of the mitochondrial membrane respiratory chain NADH dehydrogenase (Complex I) which catalyzes electron transfer from NADH through the respiratory chain, using ubiquinone as an electron acceptor. Essential for the catalytic activity of complex I. In Halichoerus grypus (Gray seal), this protein is NADH-ubiquinone oxidoreductase chain 3.